A 154-amino-acid chain; its full sequence is Iron-sulfur cluster assembly 2 homolog, mitochondrial (154 aa).

Residues 1 to 8 (MAASRALS) constitute a mitochondrion transit peptide. Fe cation-binding residues include C79, C144, and C146.

It belongs to the HesB/IscA family. As to quaternary structure, heterotetramer; forms a dimer of dimers with IBA57. Interacts with [2Fe-2S]-ISCA2 forming the heterodimer [2Fe- 2S]-ISCA2-IBA57 complex; [2Fe-2S] cluster binding is absolutely required to promote the complex formation.

It localises to the mitochondrion. In terms of biological role, involved in the maturation of mitochondrial 4Fe-4S proteins functioning late in the iron-sulfur cluster assembly pathway. May be involved in the binding of an intermediate of Fe/S cluster assembly. In Mus musculus (Mouse), this protein is Iron-sulfur cluster assembly 2 homolog, mitochondrial (Isca2).